Consider the following 483-residue polypeptide: Cysteine proteinase 1, mitochondrial (483 aa).

The transit peptide at 1–30 directs the protein to the mitochondrion; that stretch reads MLPTSVSWSLYLKTFRSHLLRAPQIVLKRM. Catalysis depends on residues C102, H398, and N421. Position 483 (K483) is a propeptide, removed in mature form; by autocatalysis.

It belongs to the peptidase C1 family. As to quaternary structure, homohexamer. Binds to nucleic acids. Binds single-stranded DNA and RNA with higher affinity than double-stranded DNA. In terms of processing, the N-terminus of isoform Cytoplasmic is blocked.

It localises to the mitochondrion. The protein localises to the cytoplasm. The catalysed reaction is Inactivates bleomycin B2 (a cytotoxic glycometallopeptide) by hydrolysis of a carboxyamide bond of beta-aminoalanine, but also shows general aminopeptidase activity. The specificity varies somewhat with source, but amino acid arylamides of Met, Leu and Ala are preferred.. Its activity is regulated as follows. Inhibited by E64, a specific inhibitor of cysteine proteases, N-ethylmaleimide, iodacetamide, and mercury and zinc ions. In terms of biological role, the normal physiological role of the enzyme is unknown, but it is not essential for the viability of yeast cells. Has aminopeptidase activity, shortening substrate peptides sequentially by 1 amino acid. Has bleomycin hydrolase activity, which can protect the cell from the toxic effects of bleomycin. Has homocysteine-thiolactonase activity, protecting the cell against homocysteine toxicity. Acts as a repressor in the GAL4 regulatory system, but this does not require either the peptidase or nucleic acid-binding activities. This is Cysteine proteinase 1, mitochondrial (LAP3) from Saccharomyces cerevisiae (strain YJM789) (Baker's yeast).